We begin with the raw amino-acid sequence, 623 residues long: Kelch repeat and BTB domain-containing protein 11 (623 aa).

The segment at 1 to 129 (MEHAVAPCVL…PEEPGEPAPV (129 aa)) is disordered. Residues 12 to 31 (PGTEPGAAGESESEGAASPA) are compositionally biased toward low complexity. Positions 42-55 (CFSSGEESPPQSLA) are enriched in polar residues. Ser64, Ser67, Ser87, and Ser107 each carry phosphoserine. Over residues 79–91 (EAGSAGAASPEEL) the composition is skewed to low complexity. One can recognise a BTB domain in the interval 140–196 (PDLVLEVSGRRLRAHKAVLAARSDYFRARASRDVLRVQGVSLTALRLLLADAYSGRM). Kelch repeat units lie at residues 311-359 (RPQS…VLYN), 360-412 (YLFV…ALDG), 413-455 (HLYA…ATTC), and 458-500 (EIYV…ALDG).

The polypeptide is Kelch repeat and BTB domain-containing protein 11 (KBTBD11) (Homo sapiens (Human)).